Consider the following 305-residue polypeptide: Homoserine O-acetyltransferase (305 aa).

Cysteine 142 acts as the Acyl-thioester intermediate in catalysis. Positions 163 and 192 each coordinate substrate. Histidine 235 serves as the catalytic Proton acceptor. Residue glutamate 237 is part of the active site. Position 249 (arginine 249) interacts with substrate.

It belongs to the MetA family.

It localises to the cytoplasm. The catalysed reaction is L-homoserine + acetyl-CoA = O-acetyl-L-homoserine + CoA. It participates in amino-acid biosynthesis; L-methionine biosynthesis via de novo pathway; O-acetyl-L-homoserine from L-homoserine: step 1/1. Transfers an acetyl group from acetyl-CoA to L-homoserine, forming acetyl-L-homoserine. This chain is Homoserine O-acetyltransferase, found in Cereibacter sphaeroides (strain KD131 / KCTC 12085) (Rhodobacter sphaeroides).